The sequence spans 599 residues: ATP-dependent rRNA helicase SPB4 (599 aa).

Residues 7 to 35 carry the Q motif motif; it reads WDTLDYTLQPWIRTAVDAMGYETMTPVQA. The Helicase ATP-binding domain occupies 38–224; it reads IPLFARNKDV…KTGMRNPVKV (187 aa). ATP is bound at residue 51–58; that stretch reads SVTGSGKT. The DEAD box motif lies at 172–175; the sequence is DEAD. In terms of domain architecture, Helicase C-terminal spans 248–415; that stretch reads KLQLLLTLLN…GLPEIIRAWI (168 aa). Residues 501-561 adopt a coiled-coil conformation; that stretch reads QREKARKLAK…LKRKAIEEKL (61 aa). The disordered stretch occupies residues 559–599; it reads EKLIENSDDSDNEVETDWKDIVRQRKKKKTNSGMQGDFGDL. Residues 564-573 are compositionally biased toward acidic residues; that stretch reads NSDDSDNEVE.

The protein belongs to the DEAD box helicase family. DDX55/SPB4 subfamily. In terms of assembly, component of pre-60S ribosomal complexes.

It localises to the nucleus. Its subcellular location is the nucleolus. It carries out the reaction ATP + H2O = ADP + phosphate + H(+). Its function is as follows. ATP-binding RNA helicase involved in the biogenesis of 60S ribosomal subunits. Binds 90S pre-ribosomal particles and dissociates from pre-60S ribosomal particles after processing of 27SB pre-rRNA. Required for the normal formation of 18S rRNA through the processing of pre-rRNAs at sites A0, A1 and A2, and the normal formation of 25S and 5.8S rRNAs through the processing of pre-rRNAs at sites C1 and C2. The chain is ATP-dependent rRNA helicase SPB4 from Eremothecium gossypii (strain ATCC 10895 / CBS 109.51 / FGSC 9923 / NRRL Y-1056) (Yeast).